Here is a 1927-residue protein sequence, read N- to C-terminus: Immunoglobulin A1 protease (1927 aa).

Residues 1 to 42 (MEKYFGEKQERFSFRKLSVGLVSATISSLFFMSVLASSSVDA) form the signal peptide. Residues 43 to 99 (QETAGVHYKYVADSELSSEEKKQLVYDIPTYVENDDETYYLVYKLNSQNQLAELPNT) constitute a propeptide that is removed on maturation. The LPXTG sorting signal signature appears at 96–100 (LPNTG). Thr99 bears the Pentaglycyl murein peptidoglycan amidated threonine mark. A run of 2 helical transmembrane segments spans residues 106 to 125 (QALV…FAVS) and 132 to 154 (KTVL…VHAL). Topologically, residues 155-1927 (ENHLLLNYNT…FRRSIFENKK (1773 aa)) are extracellular. The segment covering 235–246 (QEQTPVSSTKPT) has biased composition (polar residues). Disordered stretches follow at residues 235–305 (QEQT…NPQD), 371–394 (SREI…TKKT), and 426–640 (EAVV…PEKT). Residues 276 to 296 (LAEHKNLETKKEEKISPKEKT) show a composition bias toward basic and acidic residues. A G5 domain is found at 314–393 (KPELLYREET…PRIVEKGTKK (80 aa)). A run of 3 repeats spans residues 419-435 (AIQP…KGEP), 436-452 (EVQP…KGEP), and 453-469 (AVQP…KGEP). The tract at residues 419–469 (AIQPELPEAVVSDKGEPEVQPTLPEAVVTDKGEPAVQPELPEAVVSDKGEP) is 3 X 17 AA approximate tandem repeats. Basic and acidic residues predominate over residues 485 to 511 (VKPETPVEKTKEQGPEKTEEVPVKPTE). 3 stretches are compositionally biased toward polar residues: residues 516–529 (NPNE…SIQG), 538–559 (EDTQ…SNKP), and 568–606 (ESNQ…STED). Residues 609–619 (TKSNTSNSNGN) are compositionally biased toward low complexity. The segment covering 620–640 (EEIKQENELDPDKKVEDPEKT) has biased composition (basic and acidic residues). Residue His1565 participates in Zn(2+) binding. Glu1566 is a catalytic residue. 2 residues coordinate Zn(2+): His1569 and Glu1589.

It belongs to the peptidase M26 family. Zn(2+) is required as a cofactor. The Gram-positive cell-wall anchor motif LPXTG is located in the N-terminal part, in contrast to such motifs in other known streptococcal and staphylococcal proteins. The protease could be cleaved by the sortase and anchored in the membrane via the two potential N-terminal transmembrane domains, whereas the propeptide located prior to the LPXTG motif would remain attached to the cell wall peptidoglycan by an amide bond.

The protein resides in the secreted. The protein localises to the cell wall. It localises to the membrane. The catalysed reaction is Cleavage of Pro-|-Thr bond in the hinge region of the heavy chain of human IgA.. In terms of biological role, zinc metalloproteinase which cleaves human immunoglobulin A1 (IgA1) in the hinge region, rendering it less efficient in coating the surface of colonizing or invading pneumococci. May be responsible for pneumococcal infection and is potentially involved in distinct stages of pneumococcal disease. The protein is Immunoglobulin A1 protease (iga) of Streptococcus pneumoniae.